The chain runs to 140 residues: Alpha-lactalbumin (140 aa).

The signal sequence occupies residues 1–19; the sequence is MMSLLPLLLIGIVLPATQA. The region spanning 20–140 is the C-type lysozyme domain; that stretch reads KDYGKCELNQ…CRENLDQWNC (121 aa). Intrachain disulfides connect C25–C140, C47–C131, C80–C96, and C92–C110. The Ca(2+) site is built by K98, D101, D103, D106, and D107.

In terms of assembly, lactose synthase (LS) is a heterodimer of a catalytic component, beta1,4-galactosyltransferase (beta4Gal-T1) and a regulatory component, alpha-lactalbumin (LA). As to expression, mammary gland specific. Secreted in milk.

It localises to the secreted. Its function is as follows. Regulatory subunit of lactose synthase, changes the substrate specificity of galactosyltransferase in the mammary gland making glucose a good acceptor substrate for this enzyme. This enables LS to synthesize lactose, the major carbohydrate component of milk. In other tissues, galactosyltransferase transfers galactose onto the N-acetylglucosamine of the oligosaccharide chains in glycoproteins. The sequence is that of Alpha-lactalbumin (LALBA) from Trichosurus vulpecula (Brush-tailed possum).